The following is a 174-amino-acid chain: Myelin basic protein (174 aa).

A disordered region spans residues 1-86 (MASQKRSSFR…GRPGDDNPVV (86 aa)). A2 bears the N-acetylalanine; in forms C1, C2 and C3 mark. Position 4 is a deamidated glutamine; in forms C1 and C2; partial (Q4). Position 8 is a phosphoserine; in forms C2 and C3 (S8). Residue S19 is modified to Phosphoserine; in form C2. Basic and acidic residues predominate over residues 22–35 (DHARHGSPRHRDSG). R25 is subject to Citrulline; in forms C1, C2 and C3. Residue S34 is modified to Phosphoserine; in forms C2 and C3. The residue at position 42 (R42) is a Citrulline; in form C3. Over residues 45-61 (GGDRHVPRRGFGKDIHA) the composition is skewed to basic and acidic residues. Phosphoserine; in forms C2 and C3 is present on S65. Residue Q72 is modified to Deamidated glutamine; in forms C1, C2 and C3; partial. S74 is subject to Phosphoserine; in form C2. N91 bears the Deamidated asparagine; in forms C1, C2 and C3; partial mark. T97 bears the Phosphothreonine; in forms C2 and C3 mark. Residue Q102 is modified to Deamidated glutamine; in forms C1, C2 and C3; partial. Deamidated glutamine; in form C1 is present on Q102. At R106 the chain carries Omega-N-methylarginine; in forms C1, C2 and C3; alternate. Residue R106 is modified to Symmetric dimethylarginine; in forms C1, C2 and C3; alternate. Residues S114 and S142 each carry the phosphoserine; in forms C2 and C3 modification. A disordered region spans residues 126–174 (SGKFYEHKSAHKGHKGSYHEGQGTLSKIFKLGGSGSRPGSRSGSPVARR). Q147 is modified (deamidated glutamine; in forms C1, C2 and C3; partial). Low complexity predominate over residues 162–174 (RPGSRSGSPVARR). Residue S165 is modified to Phosphoserine; in forms C2 and C3. At R166 the chain carries Citrulline; in forms C2 and C3. At S169 the chain carries Phosphoserine; in forms C2 and C3.

It belongs to the myelin basic protein family. In terms of assembly, homodimer. In terms of processing, several charge isomers are produced as a result of optional post-translational modifications, such as phosphorylation of serine or threonine residues, deamidation of glutamine or asparagine residues, citrullination and methylation of arginine residues. Chicken MBP contains 4 charge components denoted as C1, C2, C3 and C8. C1 lacks any phosphorylation sites, whereas C2 and C3 contain respectively 10 and 8 phosphorylation sites and arginine residues modified to citrulline. All three charge components contain deamidated glutamines and asparagine, and a methylated arginine.

Its subcellular location is the myelin membrane. Is, with PLP, the most abundant protein component of the myelin membrane in the CNS. Has a role in both the formation and stabilization of this compact multilayer arrangement of bilayers. Each splice variant and charge isomer may have a specialized function in the assembly of an optimized, biochemically functional myelin membrane. The sequence is that of Myelin basic protein (MBP) from Gallus gallus (Chicken).